A 253-amino-acid polypeptide reads, in one-letter code: Ribosomal RNA small subunit methyltransferase G (253 aa).

S-adenosyl-L-methionine-binding positions include glycine 84, leucine 89, 136 to 137 (IE), and arginine 155.

It belongs to the methyltransferase superfamily. RNA methyltransferase RsmG family.

It localises to the cytoplasm. Its function is as follows. Specifically methylates the N7 position of a guanine in 16S rRNA. This chain is Ribosomal RNA small subunit methyltransferase G, found in Prochlorococcus marinus (strain SARG / CCMP1375 / SS120).